A 258-amino-acid polypeptide reads, in one-letter code: MLDFTEASLKKVLTRYNVALEKALTPEEAAEELYPKDELIYPIAKAIFEGEEDDVVEGLQAAIEAGKDPIDLIDDALMVGMGVVIRLYDEGVIFLPNVMMSADAMLEGIEYCKENSGATPKTKGTVVCHVAEGDVHDIGKNIVTALLRANGYNVVDLGRDVPAEEVLAAVQKEKPIMLTGTALMTTTMYAFKEVNDMLLENGIKIPFACGGGAVNQDFVSQFALGVYGEEAADAPKIADAIIAGTTDVTELREKFHKH.

In terms of domain architecture, B12-binding N-terminal spans 30–124 (AEELYPKDEL…NSGATPKTKG (95 aa)). The B12-binding domain occupies 123–248 (KGTVVCHVAE…DAIIAGTTDV (126 aa)). His136 lines the methylcob(III)alamin pocket.

This sequence belongs to the methylamine corrinoid protein family. In terms of assembly, heterotetramer, composed of 2 MtaB and 2 MtaC subunits.

Its function is as follows. Harbors a corrinoid prosthetic group and acts as a methyl group carrier in methanogenesis in the methanol pathway. The methyl group of methanol is first transferred to the corrinoid prosthetic group of MtaC in the cob(I)amide oxidation state. This reaction is mediated by MtaB. The methyl group from MtaC is then transferred to coenzyme M by MtaA. The chain is Methanol--corrinoid protein (mtaC) from Methanosarcina barkeri (strain Fusaro / DSM 804).